Here is a 657-residue protein sequence, read N- to C-terminus: Translation factor GUF1, mitochondrial (657 aa).

The transit peptide at 1 to 39 (MRGCLQSVKWLTSAVRQSQSLTSSTRFPRRLFNTSTLHY) directs the protein to the mitochondrion. The tr-type G domain occupies 59 to 239 (ERFRNFCIVA…TVIEQVPAPV (181 aa)). Residues 68–75 (AHVDHGKS), 132–136 (DTPGH), and 186–189 (NKVD) contribute to the GTP site.

Belongs to the TRAFAC class translation factor GTPase superfamily. Classic translation factor GTPase family. LepA subfamily.

Its subcellular location is the mitochondrion inner membrane. It carries out the reaction GTP + H2O = GDP + phosphate + H(+). Promotes mitochondrial protein synthesis. May act as a fidelity factor of the translation reaction, by catalyzing a one-codon backward translocation of tRNAs on improperly translocated ribosomes. Binds to mitochondrial ribosomes in a GTP-dependent manner. In Blastomyces gilchristii (strain SLH14081) (Blastomyces dermatitidis), this protein is Translation factor GUF1, mitochondrial.